Consider the following 230-residue polypeptide: 2,3-bisphosphoglycerate-dependent phosphoglycerate mutase (230 aa).

Residues 8–15 (RHGESEWN), 21–22 (TG), Arg60, 87–90 (ERHY), Lys98, 114–115 (RR), and 183–184 (GN) contribute to the substrate site. Catalysis depends on His9, which acts as the Tele-phosphohistidine intermediate. Catalysis depends on Glu87, which acts as the Proton donor/acceptor.

This sequence belongs to the phosphoglycerate mutase family. BPG-dependent PGAM subfamily.

The catalysed reaction is (2R)-2-phosphoglycerate = (2R)-3-phosphoglycerate. It functions in the pathway carbohydrate degradation; glycolysis; pyruvate from D-glyceraldehyde 3-phosphate: step 3/5. Catalyzes the interconversion of 2-phosphoglycerate and 3-phosphoglycerate. In Streptococcus agalactiae serotype Ia (strain ATCC 27591 / A909 / CDC SS700), this protein is 2,3-bisphosphoglycerate-dependent phosphoglycerate mutase.